Here is a 386-residue protein sequence, read N- to C-terminus: Diels-Alderase phm7 (386 aa).

A beta-sandwich motif region spans residues 1–223 (MSEPTSSSSL…MVRGWSARPW (223 aa)). Substrate is bound by residues Glu-51, Asn-84, and Lys-356. The beta-barrel motif stretch occupies residues 223 to 386 (WPTFMNDAYY…FGGQLQIPVP (164 aa)).

This sequence belongs to the Diels-Alderase family.

It functions in the pathway secondary metabolite biosynthesis. With respect to regulation, 3-aminomethyl-p-menthane which is similar to the phomasetin substructure, dose-dependently inhibits phm7 activity in vitro and production of phomasetin in the fungus. Its function is as follows. Diels-Alderase; part of the gene cluster that mediates the biosynthesis of the trans-fused decalin-containing tetramic acid phomasetin, the stereochemical opposite of the HIV-1 integrase inhibitor equisetin. The PKS module of phm1 together with the enoylreductase phm4 catalyze the formation of the polyketide unit which is then conjugated to L-serine by the condensation domain of the phm1 NRPS module. Activity of the Dieckmann cyclase domain (RED) of phm1 results in release of the Dieckmann product intermediate. The Diels-Alderase phm7 then uses the Dieckmann product of phm1 as substrate and catalyzes the Diels-Alder cycloaddition to form the decalin ring of N-desmethylphomasetin. N-desmethylphomasetin is further methylated to phomasetin by the methyltransferase phm5. In Pyrenochaetopsis sp, this protein is Diels-Alderase phm7.